The chain runs to 407 residues: Serpin-Z2 (407 aa).

Residues 1–28 are disordered; the sequence is MDSKRKNQELSTSETADPSLSKTNKKQK. Residues 9–22 show a composition bias toward polar residues; that stretch reads ELSTSETADPSLSK. Positions 344–368 are RCL; the sequence is GTEAAAATTVVVVTGSCLWEPKKKI.

The protein belongs to the serpin family.

In terms of biological role, probable serine protease inhibitor. In Arabidopsis thaliana (Mouse-ear cress), this protein is Serpin-Z2.